Reading from the N-terminus, the 289-residue chain is Probable endonuclease 4 (289 aa).

9 residues coordinate Zn(2+): H74, H115, E150, D184, H187, H218, D231, H233, and E263.

Belongs to the AP endonuclease 2 family. Zn(2+) serves as cofactor.

The catalysed reaction is Endonucleolytic cleavage to 5'-phosphooligonucleotide end-products.. In terms of biological role, endonuclease IV plays a role in DNA repair. It cleaves phosphodiester bonds at apurinic or apyrimidinic (AP) sites, generating a 3'-hydroxyl group and a 5'-terminal sugar phosphate. The chain is Probable endonuclease 4 from Mycoplasma mycoides subsp. mycoides SC (strain CCUG 32753 / NCTC 10114 / PG1).